The following is a 362-amino-acid chain: Phosphoserine aminotransferase (362 aa).

Positions 9 and 42 each coordinate L-glutamate. Pyridoxal 5'-phosphate contacts are provided by residues 76 to 77, W102, T153, D174, and Q197; that span reads GR. At K198 the chain carries N6-(pyridoxal phosphate)lysine. Position 239 to 240 (239 to 240) interacts with pyridoxal 5'-phosphate; that stretch reads NT.

This sequence belongs to the class-V pyridoxal-phosphate-dependent aminotransferase family. SerC subfamily. Homodimer. Requires pyridoxal 5'-phosphate as cofactor.

The protein resides in the cytoplasm. The enzyme catalyses O-phospho-L-serine + 2-oxoglutarate = 3-phosphooxypyruvate + L-glutamate. It carries out the reaction 4-(phosphooxy)-L-threonine + 2-oxoglutarate = (R)-3-hydroxy-2-oxo-4-phosphooxybutanoate + L-glutamate. The protein operates within amino-acid biosynthesis; L-serine biosynthesis; L-serine from 3-phospho-D-glycerate: step 2/3. Its pathway is cofactor biosynthesis; pyridoxine 5'-phosphate biosynthesis; pyridoxine 5'-phosphate from D-erythrose 4-phosphate: step 3/5. Its function is as follows. Catalyzes the reversible conversion of 3-phosphohydroxypyruvate to phosphoserine and of 3-hydroxy-2-oxo-4-phosphonooxybutanoate to phosphohydroxythreonine. In Escherichia coli O157:H7, this protein is Phosphoserine aminotransferase.